The primary structure comprises 802 residues: MSDENHNSDVQDIPSPELSVDSNSNENELMNNSSADDGIEFDAPEEEREAEREEENEEQHELEDVNDEEEEDKEEKGEENGEVINTEEEEEEEHQQKGGNDDDDDDNEEEEEEEEDDDDDDDDDDDDEEEEEEEEEEGNDNSSVGSDSAAEDGEDEEDKKDKTKDKEVELRRETLEKEQKDVDEAIKKITREENDNTHFPTNMENVNYDLLQKQVKYIMDSNMLNLPQFQHLPQEEKMSAILAMLNSNSDTALSVPPHDSTISTTASASATSGARSNDQRKPPLSDAQRRMRFPRADLSKPITEEEHDRYAAYLHGENKITEMHNIPPKSRLFIGNLPLKNVSKEDLFRIFSPYGHIMQINIKNAFGFIQFDNPQSVRDAIECESQEMNFGKKLILEVSSSNARPQFDHGDHGTNSSSTFISSAKRPFQTESGDMYNDDNGAGYKKSRRHTVSCNIFVKRTADRTYAIEVFNRFRDGTGLETDMIFLKPRMELGKLINDAAYNGVWGVVLVNKTHNVDVQTFYKGSQGETKFDEYISISADDAVAIFNNIKNNRNNSRPTDYRAMSHQQNIYGAPPLPVPNGPAVGPPPQTNYYQGYSMPPPQQQQQQPYGNYGMPPPSHDQGYGSQPPIPMNQSYGRYQTSIPPPPPQQQIPQGYGRYQAGPPPQPPSQTPMDQQQLLSAIQNLPPNVVSNLLSMAQQQQQQPHAQQQLVGLIQSMQGQAPQQQQQQLGGYSSMNSSSPPPMSTNYNGQNISAKPSAPPMSHQPPPPQQQQQQQQQQQQQQQQPAGNNVQSLLDSLAKLQK.

Disordered regions lie at residues 1 to 174 (MSDE…RRET) and 252 to 293 (ALSV…RMRF). Residues 22-34 (SNSNENELMNNSS) are compositionally biased toward low complexity. The segment covering 37-73 (DGIEFDAPEEEREAEREEENEEQHELEDVNDEEEEDK) has biased composition (acidic residues). Position 86 is a phosphothreonine (T86). Composition is skewed to acidic residues over residues 101 to 139 (DDDDDDNEEEEEEEEDDDDDDDDDDDDEEEEEEEEEEGN) and 149 to 158 (AAEDGEDEED). A compositionally biased stretch (basic and acidic residues) spans 159-174 (KKDKTKDKEVELRRET). A compositionally biased stretch (low complexity) spans 260–276 (STISTTASASATSGARS). Residues 277–293 (NDQRKPPLSDAQRRMRF) show a composition bias toward basic and acidic residues. Residues 330–401 (SRLFIGNLPL…KKLILEVSSS (72 aa)) enclose the RRM domain. Residue T451 is modified to Phosphothreonine. Disordered stretches follow at residues 571 to 675 (IYGA…PMDQ) and 717 to 802 (MQGQ…KLQK). Pro residues predominate over residues 575–590 (PPLPVPNGPAVGPPPQ). Over residues 593–614 (YYQGYSMPPPQQQQQQPYGNYG) the composition is skewed to low complexity. Over residues 632–642 (MNQSYGRYQTS) the composition is skewed to polar residues. Composition is skewed to low complexity over residues 651-661 (QIPQGYGRYQA) and 717-738 (MQGQAPQQQQQQLGGYSSMNSS). The span at 745-754 (TNYNGQNISA) shows a compositional bias: polar residues. The segment covering 757 to 769 (SAPPMSHQPPPPQ) has biased composition (pro residues). Residues 770-785 (QQQQQQQQQQQQQQQP) are compositionally biased toward low complexity.

The protein resides in the nucleus. It is found in the nucleoplasm. In terms of biological role, may be required for packaging pre-mRNAs into ribonucleoprotein structures amenable to efficient nuclear RNA processing. Binds to poly(A)+ RNA. Appears to act in the maintenance of CLN3 mRNA levels. This Saccharomyces cerevisiae (strain ATCC 204508 / S288c) (Baker's yeast) protein is Nuclear polyadenylated RNA-binding protein 3 (NAB3).